The following is a 398-amino-acid chain: 8-amino-7-oxononanoate synthase (398 aa).

Arg-26 is a binding site for substrate. 113-114 (GF) is a pyridoxal 5'-phosphate binding site. Residue His-138 participates in substrate binding. Positions 181, 209, and 238 each coordinate pyridoxal 5'-phosphate. Lys-241 carries the N6-(pyridoxal phosphate)lysine modification. A substrate-binding site is contributed by Thr-355.

It belongs to the class-II pyridoxal-phosphate-dependent aminotransferase family. BioF subfamily. In terms of assembly, homodimer. Requires pyridoxal 5'-phosphate as cofactor.

The enzyme catalyses 6-carboxyhexanoyl-[ACP] + L-alanine + H(+) = (8S)-8-amino-7-oxononanoate + holo-[ACP] + CO2. The protein operates within cofactor biosynthesis; biotin biosynthesis. Catalyzes the decarboxylative condensation of pimeloyl-[acyl-carrier protein] and L-alanine to produce 8-amino-7-oxononanoate (AON), [acyl-carrier protein], and carbon dioxide. The chain is 8-amino-7-oxononanoate synthase from Aeromonas hydrophila subsp. hydrophila (strain ATCC 7966 / DSM 30187 / BCRC 13018 / CCUG 14551 / JCM 1027 / KCTC 2358 / NCIMB 9240 / NCTC 8049).